Reading from the N-terminus, the 158-residue chain is Protein Smg homolog (158 aa).

This sequence belongs to the Smg family.

This chain is Protein Smg homolog, found in Pseudoalteromonas atlantica (strain T6c / ATCC BAA-1087).